Consider the following 129-residue polypeptide: Large ribosomal subunit protein uL22 (129 aa).

Belongs to the universal ribosomal protein uL22 family. Part of the 50S ribosomal subunit.

Its function is as follows. This protein binds specifically to 23S rRNA; its binding is stimulated by other ribosomal proteins, e.g. L4, L17, and L20. It is important during the early stages of 50S assembly. It makes multiple contacts with different domains of the 23S rRNA in the assembled 50S subunit and ribosome. The globular domain of the protein is located near the polypeptide exit tunnel on the outside of the subunit, while an extended beta-hairpin is found that lines the wall of the exit tunnel in the center of the 70S ribosome. The sequence is that of Large ribosomal subunit protein uL22 from Beijerinckia indica subsp. indica (strain ATCC 9039 / DSM 1715 / NCIMB 8712).